The chain runs to 322 residues: Zinc finger C2HC domain-containing protein CBG14627 (322 aa).

2 C2HC/C3H-type zinc fingers span residues 9–38 and 119–148; these read PVYP…LATL and DYVQ…QTTR. Positions 13, 16, 28, 32, 123, 126, 138, and 142 each coordinate Zn(2+). The disordered stretch occupies residues 144 to 322; that stretch reads EQTTRKQGGK…SRNNSRSRIF (179 aa). The segment covering 148-168 has biased composition (polar residues); that stretch reads RKQGGKSSAGNRGLTSNNYRS. The segment covering 171 to 219 has biased composition (basic and acidic residues); the sequence is SKHEGRKQESSSRNGSAERKTTTRGRDGSLSRARRDDSNDLTNRRKSLE. Residues 220 to 238 are compositionally biased toward polar residues; the sequence is TRSQLTTGQANNRTTSLSA. Positions 278–294 are enriched in low complexity; the sequence is TTTTASASRSGSGSSSR. Over residues 296 to 305 the composition is skewed to basic and acidic residues; sequence RTRDESRESR. The segment covering 311–322 has biased composition (low complexity); sequence SNSRNNSRSRIF.

Belongs to the ZC2HC1 family. It depends on Zn(2+) as a cofactor.

The polypeptide is Zinc finger C2HC domain-containing protein CBG14627 (Caenorhabditis briggsae).